The chain runs to 289 residues: GTPase Era (289 aa).

The region spanning 2-167 (KSGFVSIIGR…LDEICKLLPE (166 aa)) is the Era-type G domain. Residues 10 to 17 (GRTNAGKS) form a G1 region. 10–17 (GRTNAGKS) serves as a coordination point for GTP. Residues 36 to 40 (NATRR) are G2. A G3 region spans residues 57–60 (DTPG). Residues 57–61 (DTPGL) and 116–119 (TKVD) each bind GTP. The interval 116–119 (TKVD) is G4. Positions 146-148 (FST) are G5. The KH type-2 domain occupies 194–274 (IYENLSDEIP…FLKLDVVVKK (81 aa)).

This sequence belongs to the TRAFAC class TrmE-Era-EngA-EngB-Septin-like GTPase superfamily. Era GTPase family. In terms of assembly, monomer.

Its subcellular location is the cytoplasm. It is found in the cell inner membrane. Its function is as follows. An essential GTPase that binds both GDP and GTP, with rapid nucleotide exchange. Plays a role in 16S rRNA processing and 30S ribosomal subunit biogenesis and possibly also in cell cycle regulation and energy metabolism. In Campylobacter concisus (strain 13826), this protein is GTPase Era.